A 394-amino-acid chain; its full sequence is Suppressor APC domain-containing protein 2 (394 aa).

Disordered regions lie at residues 1–23 (MAGA…STEG), 95–125 (LLSA…RLVF), and 150–188 (GPSA…SSSA). The segment covering 177-188 (SQSAALEPSSSA) has biased composition (polar residues). Threonine 219 bears the Phosphothreonine mark. Residues 227–277 (GLLKQMKELEQEKEVLLQGLEMMARGRDWYQQQLQRVQERQRRLGQSRASA) are a coiled coil. Serine 284 carries the phosphoserine modification. Residues 336 to 384 (QQQTILMLKEQNRLLTQEVTEKSERITQLEQEKSALIKQLFEARALSQQ) are a coiled coil.

Interacts with a spindle orientation complex at least composed of GNAI1, GPSM2 and NUMA1. Interacts with GPSM2 (via TPR motifs); this interaction is required to prevent GPSM2 anchoring at the mitotic apical cortex and is inhibited in presence of NUMA1 in a dose dependent manner. Interacts with PARD3. In terms of tissue distribution, expressed in 5-month-old fetal tissues, including stomach, intestine, colon, liver, brain, lung, heart, spleen and kidney. Undetectable in non-cancerous adult tissues. Expressed in many primary gastric carcinoma, but almost not in adjacent normal mucosa. Expressed preferentially in M and G1 phases, compared to S and G2 phases. Expression is up-regulated in hepatocellular carcinoma (HCC) and colorectal cancer (CRC) tissues (at protein level).

Its subcellular location is the cytoplasm. The protein localises to the nucleus. The protein resides in the cell cortex. It is found in the apical cell membrane. It localises to the cell junction. Its subcellular location is the tight junction. In terms of biological role, plays a role in planar mitotic spindle orientation in retinal progenitor cells (RPCs) and promotes the production of symmetric terminal divisions. Negatively regulates the mitotic apical cortex localization of GPSM2. Involved also in positive regulation of cell proliferation and tumor cell growth. In Homo sapiens (Human), this protein is Suppressor APC domain-containing protein 2.